A 153-amino-acid polypeptide reads, in one-letter code: Aspartate carbamoyltransferase regulatory chain (153 aa).

Positions 110, 115, 138, and 141 each coordinate Zn(2+).

It belongs to the PyrI family. As to quaternary structure, contains catalytic and regulatory chains. The cofactor is Zn(2+).

Its function is as follows. Involved in allosteric regulation of aspartate carbamoyltransferase. The protein is Aspartate carbamoyltransferase regulatory chain of Bacteroides fragilis (strain ATCC 25285 / DSM 2151 / CCUG 4856 / JCM 11019 / LMG 10263 / NCTC 9343 / Onslow / VPI 2553 / EN-2).